A 575-amino-acid chain; its full sequence is Flagellin A (575 aa).

Repeat copies occupy residues 405–409 (GSGFS), 411–415 (GSGFS), and 447–450 (GSGF).

It belongs to the bacterial flagellin family. Heteromer of flaA and flaB.

It is found in the secreted. The protein localises to the bacterial flagellum. Functionally, flagellin is the subunit protein which polymerizes to form the filaments of bacterial flagella. This chain is Flagellin A (flaA), found in Campylobacter jejuni.